The sequence spans 229 residues: Small ribosomal subunit protein uS5 (229 aa).

One can recognise an S5 DRBM domain in the interval L61 to V124.

The protein belongs to the universal ribosomal protein uS5 family. As to quaternary structure, part of the 30S ribosomal subunit. Contacts protein S4.

Functionally, with S4 and S12 plays an important role in translational accuracy. In Methanococcus maripaludis (strain C6 / ATCC BAA-1332), this protein is Small ribosomal subunit protein uS5.